The chain runs to 163 residues: Putative 4-hydroxy-4-methyl-2-oxoglutarate aldolase (163 aa).

Substrate contacts are provided by residues 76–79 (GDMI) and arginine 98. Aspartate 99 is a binding site for a divalent metal cation.

This sequence belongs to the class II aldolase/RraA-like family. As to quaternary structure, homotrimer. It depends on a divalent metal cation as a cofactor.

It carries out the reaction 4-hydroxy-4-methyl-2-oxoglutarate = 2 pyruvate. The catalysed reaction is oxaloacetate + H(+) = pyruvate + CO2. Catalyzes the aldol cleavage of 4-hydroxy-4-methyl-2-oxoglutarate (HMG) into 2 molecules of pyruvate. Also contains a secondary oxaloacetate (OAA) decarboxylase activity due to the common pyruvate enolate transition state formed following C-C bond cleavage in the retro-aldol and decarboxylation reactions. In Pseudomonas fluorescens (strain SBW25), this protein is Putative 4-hydroxy-4-methyl-2-oxoglutarate aldolase.